A 521-amino-acid chain; its full sequence is MFFIEHPFVYLGLDLIVGCLIGFFLRKQLVERQQQNIQAQSKQIIENAIIDAEQLKKEALLQSKEEVYQIKQSLEAEVKLERDDLKDEHRQLKKQRDNIKRENERFEKRQSRHVVAEKALERRLREVDVKHEEADNEILKQRDELARIAGITQDEAKKLLMESIESEAQMDAAKRLSKIENEMKLEADRKARSILALAICRYAGDYVADKTVSMVPLPSDEMKGRIIGREGRNIRAIEAATGIDIIIDDTPEAVILSGFNPVRREVARLALIQLISDGRIHPGRIEEVVEKVSKELDEVMCEAGEQATFDVGAHGVHVELIKLLGRLRYRTSYGQNVLQHSLEVAFLCGIMAAELGIDVKMAKRAGLLHDIGKAVDHEVEGSHAVIGRDLAKKYGEPDEIVYAIGAHHADQPPKSVLDILVQAADALSGARPGARKEMLQSYVKRLEDLEAIANKFPGVDKSYAIQAGRDLRIIADAQKISDAEATLLSRNIAASIEEKLTYPGQIRVTVIRETRSVEYAK.

A helical transmembrane segment spans residues 1–21 (MFFIEHPFVYLGLDLIVGCLI). Residues 211–271 (TVSMVPLPSD…VRREVARLAL (61 aa)) enclose the KH domain. In terms of domain architecture, HD spans 337–430 (VLQHSLEVAF…VQAADALSGA (94 aa)).

This sequence belongs to the RNase Y family.

Its subcellular location is the cell membrane. Endoribonuclease that initiates mRNA decay. The polypeptide is Ribonuclease Y (Desulfotalea psychrophila (strain LSv54 / DSM 12343)).